The primary structure comprises 211 residues: uncharacterized protein (211 aa).

Disordered regions lie at residues 45 to 74 and 147 to 211; these read RSCGRSSTGGCSPCSGPGPSSPRTSRGALS and AETR…WEEP. Residues 48-71 are compositionally biased toward low complexity; it reads GRSSTGGCSPCSGPGPSSPRTSRG. Positions 195–205 are enriched in polar residues; it reads DSGSIKMSENE.

This is an uncharacterized protein from Homo sapiens (Human).